Here is a 239-residue protein sequence, read N- to C-terminus: tRNA (guanine-N(1)-)-methyltransferase (239 aa).

Residues G108 and 127 to 132 each bind S-adenosyl-L-methionine; that span reads LGDFVL.

The protein belongs to the RNA methyltransferase TrmD family. As to quaternary structure, homodimer.

It is found in the cytoplasm. It carries out the reaction guanosine(37) in tRNA + S-adenosyl-L-methionine = N(1)-methylguanosine(37) in tRNA + S-adenosyl-L-homocysteine + H(+). Its function is as follows. Specifically methylates guanosine-37 in various tRNAs. The sequence is that of tRNA (guanine-N(1)-)-methyltransferase from Streptococcus pyogenes serotype M6 (strain ATCC BAA-946 / MGAS10394).